Here is a 193-residue protein sequence, read N- to C-terminus: Ubiquitin-conjugating enzyme E2 E1 (193 aa).

Positions 1–45 are disordered; that stretch reads MSDDDSRASTSSSSSSSSNQQTEKETNTPKKKESKVSMSKNSKLL. S2 is modified (N-acetylserine). Over residues 8–18 the composition is skewed to low complexity; that stretch reads ASTSSSSSSSS. Residues 22 to 35 show a composition bias toward basic and acidic residues; it reads TEKETNTPKKKESK. Residues 36–45 are compositionally biased toward polar residues; it reads VSMSKNSKLL. In terms of domain architecture, UBC core spans 47–193; it reads TSAKRIQKEL…ARQWTKRYAT (147 aa). C131 functions as the Glycyl thioester intermediate in the catalytic mechanism. A Glycyl lysine isopeptide (Lys-Gly) (interchain with G-Cter in ISG15) cross-link involves residue K136.

The protein belongs to the ubiquitin-conjugating enzyme family. As to quaternary structure, interacts with RNF14. In terms of processing, ISGylation suppresses ubiquitin E2 enzyme activity. Autoubiquitinated in vitro.

The protein localises to the nucleus. The catalysed reaction is S-ubiquitinyl-[E1 ubiquitin-activating enzyme]-L-cysteine + [E2 ubiquitin-conjugating enzyme]-L-cysteine = [E1 ubiquitin-activating enzyme]-L-cysteine + S-ubiquitinyl-[E2 ubiquitin-conjugating enzyme]-L-cysteine.. It catalyses the reaction S-ubiquitinyl-[E1 ubiquitin-activating enzyme]-L-cysteine + [acceptor protein]-L-lysine = [E1 ubiquitin-activating enzyme]-L-cysteine + N(6)-monoubiquitinyl-[acceptor protein]-L-lysine.. It participates in protein modification; protein ubiquitination. Functionally, accepts ubiquitin from the E1 complex and catalyzes its covalent attachment to other proteins. Catalyzes the covalent attachment of ISG15 to other proteins. Mediates the selective degradation of short-lived and abnormal proteins. In vitro also catalyzes 'Lys-48'-linked polyubiquitination. Catalyzes monoubiquitination of other proteins in both an E3-dependent and E3-independent manner. The protein is Ubiquitin-conjugating enzyme E2 E1 of Homo sapiens (Human).